The primary structure comprises 259 residues: Phosphatidylglycerol--prolipoprotein diacylglyceryl transferase (259 aa).

Transmembrane regions (helical) follow at residues 9–29 (IIFS…VVGI), 55–75 (FITY…VLLY), 92–112 (EGGM…YLFC), and 117–137 (INFL…LFLG). An a 1,2-diacyl-sn-glycero-3-phospho-(1'-sn-glycerol)-binding site is contributed by Arg-138. The next 3 helical transmembrane spans lie at 172–192 (QLYE…YAVF), 201–221 (GLNS…IEMF), and 228–248 (IGFI…MLLL).

It belongs to the Lgt family.

The protein resides in the cell inner membrane. It carries out the reaction L-cysteinyl-[prolipoprotein] + a 1,2-diacyl-sn-glycero-3-phospho-(1'-sn-glycerol) = an S-1,2-diacyl-sn-glyceryl-L-cysteinyl-[prolipoprotein] + sn-glycerol 1-phosphate + H(+). It participates in protein modification; lipoprotein biosynthesis (diacylglyceryl transfer). Its function is as follows. Catalyzes the transfer of the diacylglyceryl group from phosphatidylglycerol to the sulfhydryl group of the N-terminal cysteine of a prolipoprotein, the first step in the formation of mature lipoproteins. The protein is Phosphatidylglycerol--prolipoprotein diacylglyceryl transferase of Rickettsia typhi (strain ATCC VR-144 / Wilmington).